Consider the following 475-residue polypeptide: Ribulose bisphosphate carboxylase large chain (475 aa).

Residues 1 to 2 constitute a propeptide that is removed on maturation; that stretch reads MS. Residue Pro3 is modified to N-acetylproline. An N6,N6,N6-trimethyllysine modification is found at Lys14. 2 residues coordinate substrate: Asn123 and Thr173. The active-site Proton acceptor is the Lys175. Lys177 contributes to the substrate binding site. Residues Lys201, Asp203, and Glu204 each coordinate Mg(2+). At Lys201 the chain carries N6-carboxylysine. His294 serves as the catalytic Proton acceptor. Arg295, His327, and Ser379 together coordinate substrate.

The protein belongs to the RuBisCO large chain family. Type I subfamily. In terms of assembly, heterohexadecamer of 8 large chains and 8 small chains; disulfide-linked. The disulfide link is formed within the large subunit homodimers. The cofactor is Mg(2+). In terms of processing, the disulfide bond which can form in the large chain dimeric partners within the hexadecamer appears to be associated with oxidative stress and protein turnover.

The protein resides in the plastid. It localises to the chloroplast. The catalysed reaction is 2 (2R)-3-phosphoglycerate + 2 H(+) = D-ribulose 1,5-bisphosphate + CO2 + H2O. It carries out the reaction D-ribulose 1,5-bisphosphate + O2 = 2-phosphoglycolate + (2R)-3-phosphoglycerate + 2 H(+). Its function is as follows. RuBisCO catalyzes two reactions: the carboxylation of D-ribulose 1,5-bisphosphate, the primary event in carbon dioxide fixation, as well as the oxidative fragmentation of the pentose substrate in the photorespiration process. Both reactions occur simultaneously and in competition at the same active site. The sequence is that of Ribulose bisphosphate carboxylase large chain from Lotus japonicus (Lotus corniculatus var. japonicus).